The sequence spans 227 residues: Probable proteasome subunit beta type-2 (227 aa).

A propeptide spans 1–6 (MITKTG) (removed in mature form). The active-site Nucleophile is the T7.

This sequence belongs to the peptidase T1B family. As to quaternary structure, the 26S proteasome consists of a 20S proteasome core and two 19S regulatory subunits. The 20S proteasome core is composed of 28 subunits that are arranged in four stacked rings, resulting in a barrel-shaped structure. The two end rings are each formed by seven alpha subunits, and the two central rings are each formed by seven beta subunits. The catalytic chamber with the active sites is on the inside of the barrel.

It localises to the cytoplasm. The protein resides in the nucleus. It carries out the reaction Cleavage of peptide bonds with very broad specificity.. Functionally, the proteasome degrades poly-ubiquitinated proteins in the cytoplasm and in the nucleus. It is essential for the regulated turnover of proteins and for the removal of misfolded proteins. The proteasome is a multicatalytic proteinase complex that is characterized by its ability to cleave peptides with Arg, Phe, Tyr, Leu, and Glu adjacent to the leaving group at neutral or slightly basic pH. It has an ATP-dependent proteolytic activity. The chain is Probable proteasome subunit beta type-2 (PUP1) from Encephalitozoon cuniculi (strain GB-M1) (Microsporidian parasite).